The following is a 631-amino-acid chain: DNA mismatch repair protein MutL (631 aa).

The interval 389 to 423 (GEREASRQAGGQRVQETQMSSYGSGQSGGRGRSYA) is disordered.

It belongs to the DNA mismatch repair MutL/HexB family.

Its function is as follows. This protein is involved in the repair of mismatches in DNA. It is required for dam-dependent methyl-directed DNA mismatch repair. May act as a 'molecular matchmaker', a protein that promotes the formation of a stable complex between two or more DNA-binding proteins in an ATP-dependent manner without itself being part of a final effector complex. This Shewanella loihica (strain ATCC BAA-1088 / PV-4) protein is DNA mismatch repair protein MutL.